The chain runs to 170 residues: Small ribosomal subunit protein uS5 (170 aa).

The region spanning 12–75 is the S5 DRBM domain; it reads LSELLVSVRR…NAAKKSMIRV (64 aa).

The protein belongs to the universal ribosomal protein uS5 family. As to quaternary structure, part of the 30S ribosomal subunit. Contacts proteins S4 and S8.

Its function is as follows. With S4 and S12 plays an important role in translational accuracy. Functionally, located at the back of the 30S subunit body where it stabilizes the conformation of the head with respect to the body. The sequence is that of Small ribosomal subunit protein uS5 from Wolbachia pipientis wMel.